Here is a 302-residue protein sequence, read N- to C-terminus: tRNA pseudouridine synthase B (302 aa).

Aspartate 42 acts as the Nucleophile in catalysis.

The protein belongs to the pseudouridine synthase TruB family. Type 1 subfamily.

It catalyses the reaction uridine(55) in tRNA = pseudouridine(55) in tRNA. Functionally, responsible for synthesis of pseudouridine from uracil-55 in the psi GC loop of transfer RNAs. The chain is tRNA pseudouridine synthase B from Leifsonia xyli subsp. xyli (strain CTCB07).